Here is a 421-residue protein sequence, read N- to C-terminus: Lipid II:glycine glycyltransferase (421 aa).

The protein belongs to the FemABX family. Monomer.

The protein localises to the cytoplasm. It catalyses the reaction beta-D-GlcNAc-(1-&gt;4)-Mur2Ac(oyl-L-Ala-D-isoglutaminyl-L-Lys-D-Ala-D-Ala)-di-trans,octa-cis-undecaprenyl diphosphate + glycyl-tRNA(Gly) = beta-D-GlcNAc-(1-&gt;4)-Mur2Ac(oyl-L-Ala-D-isoglutaminyl-L-Lys-(N(6)-Gly)-D-Ala-D-Ala)-di-trans,octa-cis-undecaprenyl diphosphate + tRNA(Gly) + H(+). Its function is as follows. Catalyzes the incorporation of the first glycine of the pentaglycine interpeptide bridge, which is characteristic of the S.aureus peptidoglycan. This glycine is added to the epsilon-amino group of the L-lysine of the membrane-bound lipid II intermediate (GlcNAc-(beta-1,4)-N-acetylmuramic acid(-L-Ala-D-iGln-L-Lys-D-Ala-D-Ala)-pyrophosphoryl-undecaprenol), using glycyl-tRNA(Gly) as donor, in a ribosome-independent mechanism. Involved in methicillin resistance. This chain is Lipid II:glycine glycyltransferase (femX), found in Staphylococcus aureus (strain COL).